Here is a 148-residue protein sequence, read N- to C-terminus: Nucleoside diphosphate kinase B (148 aa).

ATP contacts are provided by K9, F57, R85, T91, R102, and N112. H115 acts as the Pros-phosphohistidine intermediate in catalysis.

This sequence belongs to the NDK family. Mg(2+) serves as cofactor.

The catalysed reaction is a 2'-deoxyribonucleoside 5'-diphosphate + ATP = a 2'-deoxyribonucleoside 5'-triphosphate + ADP. The enzyme catalyses a ribonucleoside 5'-diphosphate + ATP = a ribonucleoside 5'-triphosphate + ADP. Major role in the synthesis of nucleoside triphosphates other than ATP. The ATP gamma phosphate is transferred to the NDP beta phosphate via a ping-pong mechanism, using a phosphorylated active-site intermediate. The sequence is that of Nucleoside diphosphate kinase B from Flaveria bidentis (Coastal plain yellowtops).